Here is a 528-residue protein sequence, read N- to C-terminus: Bifunctional dihydrofolate reductase-thymidylate synthase (528 aa).

The interval 1–20 (MASELLANPTNGSGITRPDP) is disordered. The 178-residue stretch at 23-200 (TYQVVVAATQ…IRYCFTTYVR (178 aa)) folds into the DHFR domain. A substrate-binding site is contributed by valine 27. Residues alanine 29 and 35-41 (GIGKDGK) contribute to the NADP(+) site. Aspartate 49 is a binding site for substrate. Residues 73-75 (RKT) and 94-97 (LTRS) each bind NADP(+). Positions 136, 142, and 157 each coordinate substrate. Position 137-144 (137-144 (GGGQIYRE)) interacts with NADP(+). Residues 202–528 (RNSVAELTSQ…HQKIEMKMAV (327 aa)) form a thymidylate synthase region. Arginine 264 is a binding site for dUMP. Residue cysteine 409 is part of the active site. Residues histidine 410, 428-432 (QRSAD), asparagine 440, and 470-472 (HVY) each bind dUMP.

The protein in the N-terminal section; belongs to the dihydrofolate reductase family. In the C-terminal section; belongs to the thymidylate synthase family.

It catalyses the reaction (6S)-5,6,7,8-tetrahydrofolate + NADP(+) = 7,8-dihydrofolate + NADPH + H(+). It carries out the reaction dUMP + (6R)-5,10-methylene-5,6,7,8-tetrahydrofolate = 7,8-dihydrofolate + dTMP. Its pathway is cofactor biosynthesis; tetrahydrofolate biosynthesis; 5,6,7,8-tetrahydrofolate from 7,8-dihydrofolate: step 1/1. Functionally, bifunctional enzyme. Involved in de novo dTMP biosynthesis. Key enzyme in folate metabolism. Can play two different roles depending on the source of dihydrofolate: de novo synthesis of tetrahydrofolate or recycling of the dihydrofolate released as one of the end products of the TS catalyzed reaction. Catalyzes an essential reaction for de novo glycine and purine synthesis, DNA precursor synthesis, and for the conversion of dUMP to dTMP. The chain is Bifunctional dihydrofolate reductase-thymidylate synthase from Daucus carota (Wild carrot).